An 83-amino-acid polypeptide reads, in one-letter code: uncharacterized protein (83 aa).

The interval 40 to 65 (RMQAGASPDEDNDVNGETSFSRSFGG) is disordered. Residues 54 to 65 (NGETSFSRSFGG) are compositionally biased toward polar residues.

This is an uncharacterized protein from Dictyostelium discoideum (Social amoeba).